The chain runs to 387 residues: Patatin-12 (387 aa).

Residues 1-23 (MATTKSFLILIVMILATTSSTFA) form the signal peptide. In terms of domain architecture, PNPLA spans 32–230 (LSIDGGGIKG…TVGDPALLSL (199 aa)). A GXGXXG motif is present at residues 36–41 (GGGIKG). The GXSXG motif lies at 75 to 79 (GTSTG). Serine 77 serves as the catalytic Nucleophile. Asparagine 115 carries an N-linked (GlcNAc...) asparagine glycan. The Proton acceptor role is filled by aspartate 216. The DGA/G signature appears at 216-218 (DGG). Residues 322-385 (ENALTGTTTE…DRKKLRANKA (64 aa)) adopt a coiled-coil conformation.

This sequence belongs to the patatin family. Tuber.

It localises to the vacuole. Probable lipolytic acyl hydrolase (LAH), an activity which is thought to be involved in the response of tubers to pathogens. The sequence is that of Patatin-12 from Solanum tuberosum (Potato).